We begin with the raw amino-acid sequence, 276 residues long: Large ribosomal subunit protein uL2 (276 aa).

The tract at residues 219–276 (TVRGSVMNPNDHPHGGGEGRSPIGRPSPVTPWGKPALGYKTRKKNKASNKLIVSRRTK) is disordered. Over residues 258–276 (KTRKKNKASNKLIVSRRTK) the composition is skewed to basic residues.

Belongs to the universal ribosomal protein uL2 family. In terms of assembly, part of the 50S ribosomal subunit. Forms a bridge to the 30S subunit in the 70S ribosome.

One of the primary rRNA binding proteins. Required for association of the 30S and 50S subunits to form the 70S ribosome, for tRNA binding and peptide bond formation. It has been suggested to have peptidyltransferase activity; this is somewhat controversial. Makes several contacts with the 16S rRNA in the 70S ribosome. The chain is Large ribosomal subunit protein uL2 from Clostridioides difficile (strain 630) (Peptoclostridium difficile).